Here is a 95-residue protein sequence, read N- to C-terminus: MNKYETLFILNPSLDEEGINTNVEKFKSVITNGGGEVENVDLWGKRKLAYEIDKVNEGIYVLVNFQSDAQLPKELDRVFRISDSIIRHLIISLEK.

The protein belongs to the bacterial ribosomal protein bS6 family.

Functionally, binds together with bS18 to 16S ribosomal RNA. In Clostridium acetobutylicum (strain ATCC 824 / DSM 792 / JCM 1419 / IAM 19013 / LMG 5710 / NBRC 13948 / NRRL B-527 / VKM B-1787 / 2291 / W), this protein is Small ribosomal subunit protein bS6.